The following is a 606-amino-acid chain: MAVARKIRTLLTVNILVFVGIVLFSVYCRLQGRSQELVRPLSGGCRPRPATPAPGSPLRSGGPRAVVAGRAELVLKGQLPAEPCSPGRLMVPEAEAEAQGGLAATLRDDGQEAEGKYEEYGYNAQLSDRISLDRSIPDYRPRKCRHMSYAQDLPQVSVVFIFVNEALSVILRSVHSVVNHTPSQLLKEVILVDDNSDNVELKFNLDQYVNKRYPGLVKIVRNSRREGLIRARLQGWKAATAPVVGFFDAHVEFNTGWAEPALSRIREDRRRIVLPAIDNIKYSTFEVQQYANAAHGYNWGLWCMYIIPPQDWLDRGDESAPIRTPAMIGCSFVVDREYFGDIGLLDPGMEVYGGENVELGMRVWQCGGSMEVLPCSRVAHIERTRKPYNNDIDYYAKRNALRAAEVWMDDFKSHVYMAWNIPMTNPGVDFGDVSERLALRQRLKCRSFKWYLENVYPEMRIYNNTLTYGEVRNSKASGYCLDQGAEDGDRAILYPCHGMSSQLVRYSADGLLQLGPLGSTAFLPDSKCLVDDGRGRTPTLRKCEDVARPTQRLWDFTQSGPIVSRATGRCLEVEMSKDANFGLRLVVQRCSGQKWMIRNWIKHARH.

At 1 to 6 (MAVARK) the chain is on the cytoplasmic side. A helical; Signal-anchor for type II membrane protein membrane pass occupies residues 7-29 (IRTLLTVNILVFVGIVLFSVYCR). Over 30 to 606 (LQGRSQELVR…IRNWIKHARH (577 aa)) the chain is Lumenal. A disordered region spans residues 43–62 (GGCRPRPATPAPGSPLRSGG). 2 disulfide bridges follow: Cys144-Cys375 and Cys366-Cys445. Positions 153–264 (LPQVSVVFIF…TGWAEPALSR (112 aa)) are catalytic subdomain A. Substrate is bound by residues Asp194 and Arg225. 3 residues coordinate Mn(2+): Asp248, His250, and His380. The interval 321–383 (PIRTPAMIGC…PCSRVAHIER (63 aa)) is catalytic subdomain B. Residues Arg383 and Tyr388 each coordinate substrate. An N-linked (GlcNAc...) asparagine glycan is attached at Asn463. The region spanning 467–603 (TYGEVRNSKA…KWMIRNWIKH (137 aa)) is the Ricin B-type lectin domain. Intrachain disulfides connect Cys480–Cys496, Cys528–Cys543, and Cys570–Cys590.

The protein belongs to the glycosyltransferase 2 family. GalNAc-T subfamily. Requires Mn(2+) as cofactor.

The protein localises to the golgi apparatus membrane. It carries out the reaction L-seryl-[protein] + UDP-N-acetyl-alpha-D-galactosamine = a 3-O-[N-acetyl-alpha-D-galactosaminyl]-L-seryl-[protein] + UDP + H(+). The enzyme catalyses L-threonyl-[protein] + UDP-N-acetyl-alpha-D-galactosamine = a 3-O-[N-acetyl-alpha-D-galactosaminyl]-L-threonyl-[protein] + UDP + H(+). It participates in protein modification; protein glycosylation. Its function is as follows. Catalyzes the initial reaction in O-linked oligosaccharide biosynthesis, the transfer of an N-acetyl-D-galactosamine residue to a serine or threonine residue on the protein receptor. Does not glycosylate apomucin or SDC3. The chain is Polypeptide N-acetylgalactosaminyltransferase 9 (GALNT9) from Macaca fascicularis (Crab-eating macaque).